Here is a 486-residue protein sequence, read N- to C-terminus: 2-hydroxymuconic semialdehyde dehydrogenase (486 aa).

Residues Glu-254 and Cys-288 contribute to the active site.

It belongs to the aldehyde dehydrogenase family. In terms of assembly, homodimer.

It carries out the reaction (2Z,4E)-2-hydroxy-6-oxohexa-2,4-dienoate + NAD(+) + H2O = (2Z,4E)-2-hydroxyhexa-2,4-dienedioate + NADH + 2 H(+). Its pathway is aromatic compound metabolism; benzoate degradation via hydroxylation. In terms of biological role, 2-hydroxymuconic acid semialdehyde can be converted to 2-hydroxypent-2,4-dienoate either directly by the action of 2-hydroxymuconic semialdehyde hydrolase (HMSH) or by the action of three sequential enzymes, the first of which is HMSD. Can oxidize not only 2-hydroxymuconic semialdehyde and its analogs but also benzaldehyde and its analogs. In Pseudomonas putida (Arthrobacter siderocapsulatus), this protein is 2-hydroxymuconic semialdehyde dehydrogenase (xylG).